Consider the following 318-residue polypeptide: DNA repair nuclease/redox regulator APEX1 (318 aa).

The interval 1–33 (MPKRGKKGAVAEDGDELKTEPEAKKSKTAAKKN) is necessary for interaction with YBX1, binding to RNA, association together with NPM1 to rRNA, endoribonuclease activity on abasic RNA and localization in the nucleoli. Residues 1 to 60 (MPKRGKKGAVAEDGDELKTEPEAKKSKTAAKKNDKEAAGEGPALYEDPPDQKTSPSGKPA) form a disordered region. An N6-acetyllysine; by EP300 mark is found at K6 and K7. The Nuclear localization signal (NLS) signature appears at 8–13 (GAVAED). Positions 16 to 38 (ELKTEPEAKKSKTAAKKNDKEAA) are enriched in basic and acidic residues. The segment at 23-33 (AKKSKTAAKKN) is necessary for interaction with NPM1 and for efficient rRNA binding. N6-acetyllysine occurs at positions 27, 31, 32, and 35. Phosphoserine is present on S54. The Nuclear export signal (NES) motif lies at 64–80 (ICSWNVDGLRAWIKKKG). C65 carries the S-nitrosocysteine; alternate modification. Residues C65 and C93 are joined by a disulfide bond. D70 serves as a coordination point for Mg(2+). Residue C93 is modified to S-nitrosocysteine; alternate. Residue E96 coordinates Mg(2+). The active site involves Y171. K197 carries the N6-acetyllysine modification. Mg(2+)-binding residues include D210 and N212. D210 serves as the catalytic Proton donor/acceptor. Residue T233 is modified to Phosphothreonine; by CDK5. The segment at 289–318 (HSLLPALCDSKIRSKALGSDHCPITLYLAL) is mitochondrial targeting sequence (MTS). D308 contributes to the Mg(2+) binding site. At C310 the chain carries S-nitrosocysteine.

It belongs to the DNA repair enzymes AP/ExoA family. Monomer. Homodimer; disulfide-linked. Component of the SET complex, composed of at least APEX1, SET, ANP32A, HMGB2, NME1 and TREX1. Associates with the dimer XRCC5/XRCC6 in a DNA-dependent manner. Interacts with SIRT1; the interaction is increased in the context of genotoxic stress. Interacts with HDAC1, HDAC2 and HDAC3; the interactions are not dependent on the APEX1 acetylation status. Interacts with XRCC1; the interaction is induced by SIRT1 and increased with the APEX1 acetylated form. Interacts with NPM1 (via N-terminal domain); the interaction is RNA-dependent and decreases in hydrogen peroxide-damaged cells. Interacts (via N-terminus) with YBX1 (via C-terminus); the interaction is increased in presence of APEX1 acetylated at Lys-6 and Lys-7. Interacts with HNRNPL; the interaction is DNA-dependent. Interacts (via N-terminus) with KPNA1 and KPNA2. Interacts with TXN; the interaction stimulates the FOS/JUN AP-1 complex DNA-binding activity in a redox-dependent manner. Interacts with GZMA, KRT8, MDM2, POLB, PRDX6, PRPF19, RPLP0, TOMM20 and WDR77. Binds to CDK5. The cofactor is Mg(2+). Mn(2+) serves as cofactor. Phosphorylated. Phosphorylation by kinase PKC or casein kinase CK2 results in enhanced redox activity that stimulates binding of the FOS/JUN AP-1 complex to its cognate binding site. AP-endodeoxyribonuclease activity is not affected by CK2-mediated phosphorylation. Phosphorylation of Thr-233 by CDK5 in response to MPP(+)/MPTP (1-methyl-4-phenylpyridinium) reduces AP-endodeoxyribonuclease activity resulting in accumulation of DNA damage and contributing to neuronal death. Post-translationally, acetylated on Lys-6 and Lys-7. Acetylation is increased by the transcriptional coactivator EP300 acetyltransferase, genotoxic agents like H(2)O(2) and methyl methanesulfonate (MMS). Acetylation increases its binding affinity to the negative calcium response element (nCaRE) DNA promoter. The acetylated form induces a stronger binding of YBX1 to the Y-box sequence in the MDR1 promoter than the unacetylated form. Deacetylated on lysines. Lys-6 and Lys-7 are deacetylated by SIRT1. In terms of processing, cleaved at Lys-31 by granzyme A to create the mitochondrial form; leading in reduction of binding to DNA, AP endodeoxyribonuclease activity, redox activation of transcription factors and to enhanced cell death. Cleaved by granzyme K; leading to intracellular ROS accumulation and enhanced cell death after oxidative stress. Cys-69 and Cys-93 are nitrosylated in response to nitric oxide (NO) and lead to the exposure of the nuclear export signal (NES). Post-translationally, ubiquitinated by MDM2; leading to translocation to the cytoplasm and proteasomal degradation.

It localises to the nucleus. The protein localises to the nucleolus. The protein resides in the nucleus speckle. It is found in the endoplasmic reticulum. Its subcellular location is the cytoplasm. It localises to the mitochondrion. The enzyme catalyses Exonucleolytic cleavage in the 3'- to 5'-direction to yield nucleoside 5'-phosphates.. Its activity is regulated as follows. NPM1 stimulates endodeoxyribonuclease activity on double-stranded DNA with AP sites, but inhibits endoribonuclease activity on single-stranded RNA containing AP sites. Multifunctional protein that plays a central role in the cellular response to oxidative stress. The two major activities of APEX1 are DNA repair and redox regulation of transcriptional factors. Functions as an apurinic/apyrimidinic (AP) endodeoxyribonuclease in the DNA base excision repair (BER) pathway of DNA lesions induced by oxidative and alkylating agents. Initiates repair of AP sites in DNA by catalyzing hydrolytic incision of the phosphodiester backbone immediately adjacent to the damage, generating a single-strand break with 5'-deoxyribose phosphate and 3'-hydroxyl ends. Also incises at AP sites in the DNA strand of DNA/RNA hybrids, single-stranded DNA regions of R-loop structures, and single-stranded RNA molecules. Has 3'-5' exoribonuclease activity on mismatched deoxyribonucleotides at the 3' termini of nicked or gapped DNA molecules during short-patch BER. Possesses DNA 3' phosphodiesterase activity capable of removing lesions (such as phosphoglycolate) blocking the 3' side of DNA strand breaks. May also play a role in the epigenetic regulation of gene expression by participating in DNA demethylation. Acts as a loading factor for POLB onto non-incised AP sites in DNA and stimulates the 5'-terminal deoxyribose 5'-phosphate (dRp) excision activity of POLB. Plays a role in the protection from granzyme-mediated cellular repair leading to cell death. Also involved in the DNA cleavage step of class switch recombination (CSR). On the other hand, APEX1 also exerts reversible nuclear redox activity to regulate DNA binding affinity and transcriptional activity of transcriptional factors by controlling the redox status of their DNA-binding domain, such as the FOS/JUN AP-1 complex after exposure to IR. Involved in calcium-dependent down-regulation of parathyroid hormone (PTH) expression by binding to negative calcium response elements (nCaREs). Together with HNRNPL or the dimer XRCC5/XRCC6, associates with nCaRE, acting as an activator of transcriptional repression. Stimulates the YBX1-mediated MDR1 promoter activity, when acetylated at Lys-6 and Lys-7, leading to drug resistance. Also acts as an endoribonuclease involved in the control of single-stranded RNA metabolism. Plays a role in regulating MYC mRNA turnover by preferentially cleaving in between UA and CA dinucleotides of the MYC coding region determinant (CRD). In association with NMD1, plays a role in the rRNA quality control process during cell cycle progression. Associates, together with YBX1, on the MDR1 promoter. Together with NPM1, associates with rRNA. Binds DNA and RNA. The sequence is that of DNA repair nuclease/redox regulator APEX1 (APEX1) from Gorilla gorilla gorilla (Western lowland gorilla).